Consider the following 353-residue polypeptide: N-formyl peptide receptor 3 (353 aa).

The Extracellular portion of the chain corresponds to 1 to 27; the sequence is METNFSIPLNETEEVLPEPAGHTVLWI. 2 N-linked (GlcNAc...) asparagine glycosylation sites follow: N4 and N10. Residues 28–50 traverse the membrane as a helical segment; sequence FSLLVHGVTFVFGVLGNGLVIWV. Topologically, residues 51–61 are cytoplasmic; it reads AGFRMTRTVNT. The chain crosses the membrane as a helical span at residues 62 to 83; sequence ICYLNLALADFSFSAILPFRMV. Residues 84–100 are Extracellular-facing; that stretch reads SVAMREKWPFGSFLCKL. A disulfide bond links C98 and C176. Residues 101-121 form a helical membrane-spanning segment; the sequence is VHVMIDINLFVSVYLITIIAL. The Cytoplasmic segment spans residues 122-140; it reads DRCICVLHPAWAQNHRTMS. A helical membrane pass occupies residues 141–162; it reads LAKRVMTGLWIFTIVLTLPNFI. Topologically, residues 163–205 are extracellular; the sequence is FWTTISTTNGDTYCIFNFAFWGDTAVERLNVFITMAKVFLILH. The chain crosses the membrane as a helical span at residues 206-226; it reads FIIGFSVPMSIITVCYGIIAA. Residues 227–242 lie on the Cytoplasmic side of the membrane; it reads KIHRNHMIKSSRPLRV. The chain crosses the membrane as a helical span at residues 243–266; sequence FAAVVASFFICWFPYELIGILMAV. At 267 to 286 the chain is on the extracellular side; that stretch reads WLKEMLLNGKYKIILVLINP. Residues 287-306 traverse the membrane as a helical segment; that stretch reads TSSLAFFNSCLNPILYVFMG. At 307–353 the chain is on the cytoplasmic side; the sequence is RNFQERLIRSLPTSLERALTEVPDSAQTSNTDTTSASPPEETELQAM. The interval 327–353 is disordered; sequence EVPDSAQTSNTDTTSASPPEETELQAM. The segment covering 331–343 has biased composition (polar residues); it reads SAQTSNTDTTSAS.

The protein belongs to the G-protein coupled receptor 1 family. As to expression, detected in various tissues with highest expression in lung.

It is found in the cell membrane. Low affinity receptor for N-formyl-methionyl peptides, which are powerful neutrophils chemotactic factors. Binding of FMLP to the receptor causes activation of neutrophils. This response is mediated via a G-protein that activates a phosphatidylinositol-calcium second messenger system. Acts as a receptor for humanin. This Homo sapiens (Human) protein is N-formyl peptide receptor 3 (FPR3).